A 114-amino-acid chain; its full sequence is Large ribosomal subunit protein uL22 (114 aa).

It belongs to the universal ribosomal protein uL22 family. Part of the 50S ribosomal subunit.

This protein binds specifically to 23S rRNA; its binding is stimulated by other ribosomal proteins, e.g. L4, L17, and L20. It is important during the early stages of 50S assembly. It makes multiple contacts with different domains of the 23S rRNA in the assembled 50S subunit and ribosome. Functionally, the globular domain of the protein is located near the polypeptide exit tunnel on the outside of the subunit, while an extended beta-hairpin is found that lines the wall of the exit tunnel in the center of the 70S ribosome. The protein is Large ribosomal subunit protein uL22 of Streptococcus pyogenes serotype M6 (strain ATCC BAA-946 / MGAS10394).